Here is a 174-residue protein sequence, read N- to C-terminus: ATP synthase subunit d, mitochondrial (174 aa).

Serine 2 carries the post-translational modification N-acetylserine.

This sequence belongs to the ATPase d subunit family.

The protein localises to the mitochondrion inner membrane. Mitochondrial membrane ATP synthase (F(1)F(0) ATP synthase or Complex V) produces ATP from ADP in the presence of a proton gradient across the membrane which is generated by electron transport complexes of the respiratory chain. F-type ATPases consist of two structural domains, F(1) - containing the extramembraneous catalytic core, and F(0) - containing the membrane proton channel, linked together by a central stalk and a peripheral stalk. During catalysis, ATP synthesis in the catalytic domain of F(1) is coupled via a rotary mechanism of the central stalk subunits to proton translocation. Part of the complex F(0) domain and the peripheric stalk, which acts as a stator to hold the catalytic alpha(3)beta(3) subcomplex and subunit a/ATP6 static relative to the rotary elements. This Kluyveromyces lactis (strain ATCC 8585 / CBS 2359 / DSM 70799 / NBRC 1267 / NRRL Y-1140 / WM37) (Yeast) protein is ATP synthase subunit d, mitochondrial (ATP7).